The following is a 322-amino-acid chain: Pantothenate kinase (322 aa).

Position 100–107 (100–107 (GSVAVGKS)) interacts with ATP.

This sequence belongs to the prokaryotic pantothenate kinase family.

It localises to the cytoplasm. It catalyses the reaction (R)-pantothenate + ATP = (R)-4'-phosphopantothenate + ADP + H(+). Its pathway is cofactor biosynthesis; coenzyme A biosynthesis; CoA from (R)-pantothenate: step 1/5. This Agrobacterium fabrum (strain C58 / ATCC 33970) (Agrobacterium tumefaciens (strain C58)) protein is Pantothenate kinase.